Consider the following 369-residue polypeptide: MKSRAAVAFAPGKPLEIVEIDVAPPKKGEVLIKVTHTGVCHTDAFTLSGDDPEGVFPVVLGHEGAGVVVEVGEGVTSVKPGDHVIPLYTAECGECEFCRSGKTNLCVAVRETQGKGLMPDGTTRFSYNGQPLYHYMGCSTFSEYTVVAEVSLAKINPEANHEHVCLLGCGVTTGIGAVHNTAKVQPGDSVAVFGLGAIGLAVVQGARQAKAGRIIAIDTNPKKFDLARRFGATDCINPNDYDKPIKDVLLDINKWGIDHTFECIGNVNVMRAALESAHRGWGQSVIIGVAGSGQEISTRPFQLVTGRVWKGSAFGGVKGRSQLPGMVEDAMKGDIDLEPFVTHTMSLDEINDAFDLMHEGKSIRTVIRY.

Zn(2+) contacts are provided by Cys-40, His-62, Cys-92, Cys-95, Cys-98, Cys-106, and Cys-169.

The protein belongs to the zinc-containing alcohol dehydrogenase family. Class-III subfamily. As to quaternary structure, homodimer. The cofactor is Zn(2+).

It is found in the cytoplasm. It catalyses the reaction S-(hydroxymethyl)glutathione + NADP(+) = S-formylglutathione + NADPH + H(+). The catalysed reaction is S-(hydroxymethyl)glutathione + NAD(+) = S-formylglutathione + NADH + H(+). It carries out the reaction a primary alcohol + NAD(+) = an aldehyde + NADH + H(+). The enzyme catalyses a secondary alcohol + NAD(+) = a ketone + NADH + H(+). It catalyses the reaction S-nitrosoglutathione + NADH + H(+) = S-(hydroxysulfenamide)glutathione + NAD(+). Its function is as follows. Has high formaldehyde dehydrogenase activity in the presence of glutathione and catalyzes the oxidation of normal alcohols in a reaction that is not GSH-dependent. In addition, hemithiolacetals other than those formed from GSH, including omega-thiol fatty acids, also are substrates. Also acts as a S-nitroso-glutathione reductase by catalyzing the NADH-dependent reduction of S-nitrosoglutathione. In Escherichia coli (strain ATCC 8739 / DSM 1576 / NBRC 3972 / NCIMB 8545 / WDCM 00012 / Crooks), this protein is S-(hydroxymethyl)glutathione dehydrogenase (frmA).